We begin with the raw amino-acid sequence, 1431 residues long: MGDMKTPDFDDLLAAFDIPDIDAKEAIQSAPDEVEGHQGAGGASLIKSGDASVGESSALRSPSPSTDSQSDPSIVSVIVKNRVRPEPFDGGENSVPDPLNHNGFVSSGGSVHMSQSRGQPNGEQWPVCSSKAIPETAGQHGSSGGSKQGSNIFNKLKPLMAQGAGDSVGRARKMQLLQQQHMQQEMNLEGADKAKAPANPSGASGAASPFFPPPKPLLSTPSTASSSSPSSSSPSVGSRVSGAVASSPLATSLTEPFNGTPRLSSSAFRRADSEEEDSDPDSGGSLVIHESPDSPTPPKLSRRLRSSPENSQSPSIPPSTSISPNAYPKPGDVPSASPASPRAQQNWLSTAAQTGNGKSLPQEERNPEHVIEERDSPESPEPEMPKSSMPTSAVTKRSCSPAAASSPSAALREPKEEDEEMEVDKASTENGQDAENTDGGKGDTDKIEVDPAQSLEAETGSSTNSDGKAATGGKAPSRPLKVRIKTIKTSTGGITRTVTRVAGKGGAAANAGKDANKGQTGGRAGPVKGGKKNDTTAGQGVKCSTLPVSTLEASSAMLAAASKVQNKMTMQSDKTKVSATAVSITKATTLPVAPAVGGISVRPTVGKTTNGGTMPCKPASIVNSTGAVISRSQSSLVEAFNKILNSKNLLPSYRPDLSTPPPPEWGLPMPAAGYRCLECGDSFALERSLARHYDRRSLRIEVTCNHCAKRLAFFNKCSLLLHAREHKERGLVMQCSHLVMRPVTVEQMIGQQDTTPIGMLSPSLSSPPLTSSTTPAGTIPAPSTSSPLKDSPSPGTASTQPSPARRGPQSPQALMPLPCKKGEALQYHNFKCPECQAQFLSKAELVTHFQQIRATPNSTCTLCSPPMMLPNWCSVSAHQRIHKHRAPHVCPECGGTARQATFQTHLEESCLHFARRIGYRCSSCQVVFGGLNSIKSHIQTAHCEVFHKCPNCPMAFKSAQSAQGHITSQHPALTAAQAKMIYKCVMCDTVFTQKPLLYMHFDTHLAKQKVHVFKCPDCTKLYAQKGSMMEHIKTAHRGLSVKAETPPTTSSPVSAPAGNSTSKPKPATENNSDELSQGPGEEEEEGEDEEGEQEGEEREDEEEEENEEEEQVSSPESGNMEWRCKECKKRFPEREDYIDHMKNEHGTVGNEEISLQIVRAFIQFSQQSSSACPNNTRGRQESLPLPVSRTLLNCKSGLKINKGSWHCSEGKRTFSSRLILEKHIRVRHGIRSRQTTDRTNAPNTRKRSLPADGAGSSSELDNESGAPPAGGGTDTDDVPGEDTSGPAKRTRASENRPVEQEEEDGTFRCTPCGFTTQDWEEFQRHIPVHCDAENAPQQCLQCGACFASAGSLSRHKFITHRLRQGQHDRNASPGASPQYGSPSSPKAGEDGDGGVSCRVCGRRFDKASDLNTHFRTHGMAFITAHRTDKPL.

Disordered regions lie at residues 24–481 and 504–538; these read KEAI…RPLK and KGGA…TTAG. Over residues 61-73 the composition is skewed to low complexity; the sequence is SPSPSTDSQSDPS. A compositionally biased stretch (polar residues) spans 103–122; the sequence is GFVSSGGSVHMSQSRGQPNG. Composition is skewed to low complexity over residues 174–188, 196–209, and 217–248; these read MQLL…EMNL, APAN…AASP, and LLST…ASSP. Residues 249 to 267 show a composition bias toward polar residues; it reads LATSLTEPFNGTPRLSSSA. Over residues 311–324 the composition is skewed to low complexity; it reads SQSPSIPPSTSISP. Over residues 342-359 the composition is skewed to polar residues; the sequence is RAQQNWLSTAAQTGNGKS. Over residues 361-377 the composition is skewed to basic and acidic residues; the sequence is PQEERNPEHVIEERDSP. Low complexity predominate over residues 385–410; it reads PKSSMPTSAVTKRSCSPAAASSPSAA. The segment covering 438 to 449 has biased composition (basic and acidic residues); the sequence is DGGKGDTDKIEV. Positions 519-528 are enriched in gly residues; that stretch reads QTGGRAGPVK. A C2H2-type 1; degenerate zinc finger spans residues 674–692; that stretch reads YRCLECGDSFALERSLARH. The tract at residues 754 to 816 is disordered; it reads TTPIGMLSPS…GPQSPQALMP (63 aa). Low complexity predominate over residues 760–775; it reads LSPSLSSPPLTSSTTP. The segment covering 781–802 has biased composition (polar residues); it reads APSTSSPLKDSPSPGTASTQPS. A C2H2-type 2; degenerate zinc finger spans residues 830–853; sequence FKCPECQAQFLSKAELVTHFQQIR. 4 C2H2-type zinc fingers span residues 919–942, 947–970, 982–1004, and 1013–1036; these read YRCS…QTAH, HKCP…TSQH, YKCV…FDTH, and FKCP…KTAH. The segment at 1041–1120 is disordered; the sequence is VKAETPPTTS…QVSSPESGNM (80 aa). The span at 1043–1057 shows a compositional bias: low complexity; it reads AETPPTTSSPVSAPA. A compositionally biased stretch (polar residues) spans 1058–1075; the sequence is GNSTSKPKPATENNSDEL. The segment covering 1080–1111 has biased composition (acidic residues); sequence GEEEEEGEDEEGEQEGEEREDEEEEENEEEEQ. The C2H2-type 7 zinc finger occupies 1122–1145; that stretch reads WRCKECKKRFPEREDYIDHMKNEH. The segment at 1205 to 1227 adopts a C2H2-type 8; degenerate zinc-finger fold; it reads WHCSEGKRTFSSRLILEKHIRVR. The segment at 1225 to 1310 is disordered; that stretch reads RVRHGIRSRQ…EEEDGTFRCT (86 aa). 2 C2H2-type zinc fingers span residues 1307–1329 and 1337–1360; these read FRCT…IPVH and QQCL…FITH. The interval 1362-1392 is disordered; the sequence is LRQGQHDRNASPGASPQYGSPSSPKAGEDGD. Over residues 1373-1384 the composition is skewed to polar residues; that stretch reads PGASPQYGSPSS. The C2H2-type 11 zinc finger occupies 1395-1425; the sequence is VSCRVCGRRFDKASDLNTHFRTHGMAFITAH.

This sequence belongs to the krueppel C2H2-type zinc-finger protein family. In terms of tissue distribution, widely expressed with highest levels in eye, spleen and ovary.

Its subcellular location is the nucleus. In terms of biological role, may be involved in transcriptional regulation. The polypeptide is Zinc finger protein 687b (znf687b) (Danio rerio (Zebrafish)).